Reading from the N-terminus, the 436-residue chain is tRNA (guanine(37)-N(1))-methyltransferase 1 (436 aa).

Residues His-229, 277 to 278 (DL), and Asn-325 contribute to the S-adenosyl-L-methionine site.

The protein belongs to the class I-like SAM-binding methyltransferase superfamily. TRM5/TYW2 family. As to quaternary structure, monomer.

The protein resides in the mitochondrion matrix. Its subcellular location is the nucleus. It is found in the cytoplasm. The enzyme catalyses guanosine(37) in tRNA + S-adenosyl-L-methionine = N(1)-methylguanosine(37) in tRNA + S-adenosyl-L-homocysteine + H(+). Specifically methylates the N1 position of guanosine-37 in various cytoplasmic and mitochondrial tRNAs. Methylation is not dependent on the nature of the nucleoside 5' of the target nucleoside. This is the first step in the biosynthesis of wybutosine (yW), a modified base adjacent to the anticodon of tRNAs and required for accurate decoding. The chain is tRNA (guanine(37)-N(1))-methyltransferase 1 from Phaeodactylum tricornutum (strain CCAP 1055/1).